The primary structure comprises 477 residues: Cysteine--tRNA ligase (477 aa).

A Zn(2+)-binding site is contributed by C29. Residues 31 to 41 (PTVYDFAHIGN) carry the 'HIGH' region motif. The Zn(2+) site is built by C224, H249, and E253. The 'KMSKS' region signature appears at 282-286 (KMSKS). K285 contributes to the ATP binding site.

It belongs to the class-I aminoacyl-tRNA synthetase family. Monomer. Zn(2+) serves as cofactor.

The protein resides in the cytoplasm. The enzyme catalyses tRNA(Cys) + L-cysteine + ATP = L-cysteinyl-tRNA(Cys) + AMP + diphosphate. The chain is Cysteine--tRNA ligase from Nitrobacter winogradskyi (strain ATCC 25391 / DSM 10237 / CIP 104748 / NCIMB 11846 / Nb-255).